Consider the following 261-residue polypeptide: Segregation and condensation protein A (261 aa).

This sequence belongs to the ScpA family. Component of a cohesin-like complex composed of ScpA, ScpB and the Smc homodimer, in which ScpA and ScpB bind to the head domain of Smc. The presence of the three proteins is required for the association of the complex with DNA.

It is found in the cytoplasm. Functionally, participates in chromosomal partition during cell division. May act via the formation of a condensin-like complex containing Smc and ScpB that pull DNA away from mid-cell into both cell halves. The sequence is that of Segregation and condensation protein A from Desulfitobacterium hafniense (strain DSM 10664 / DCB-2).